Consider the following 594-residue polypeptide: Parathyroid hormone/parathyroid hormone-related peptide receptor (594 aa).

The first 28 residues, 1 to 28, serve as a signal peptide directing secretion; the sequence is MGTARIAPGLALLLCCPVLSSAYALVDA. The Extracellular segment spans residues 29–188; it reads DDVMTKEEQI…TREREVFDRL (160 aa). 3 disulfide bridges follow: C48–C117, C108–C149, and C132–C171. The interval 66-102 is disordered; it reads DKGWTSASTSGKPRKDKASGKLYPESEEDKEAPTDSR. N152, N162, N167, and N177 each carry an N-linked (GlcNAc...) asparagine glycan. The helical transmembrane segment at 189-209 threads the bilayer; that stretch reads GMIYTVGYSMSLASLTVAVLI. At 210-223 the chain is on the cytoplasmic side; the sequence is LAYFRRLHCTRNYI. Residues 224–244 traverse the membrane as a helical segment; sequence HMHLFLSFMLRAVSIFVKDAV. The Extracellular portion of the chain corresponds to 245 to 295; the sequence is LYSGATLDEAERLTEEELRAIAQAPPPPATAAAGYAGCRVAVTFFLYFLAT. The helical transmembrane segment at 296-316 threads the bilayer; that stretch reads NYYWILVEGLYLHSLIFMAFF. Residues 317–319 are Cytoplasmic-facing; sequence SEK. Residues 320 to 340 traverse the membrane as a helical segment; the sequence is KYLWGFTVFGWGLPAVFVAVW. Residues 341–361 are Extracellular-facing; that stretch reads VSVRATLANTGCWDLSSGNKK. A helical membrane pass occupies residues 362–382; that stretch reads WIIQVPILASIVLHFILFINI. Over 383-405 the chain is Cytoplasmic; sequence VRVLATKLRETNAGRCDTRQQYR. A helical transmembrane segment spans residues 406–426; sequence KLLKSTLVLMPLFGVHYIVFM. Residues 427–440 lie on the Extracellular side of the membrane; the sequence is ATPYTEVSGTLWQV. Residues 441–461 traverse the membrane as a helical segment; it reads QMHYEMLFNSFQGFFVAIIYC. Residues 462–594 lie on the Cytoplasmic side of the membrane; the sequence is FCNGEVQAEI…LLQEEWETVM (133 aa). The short motif at 475 to 478 is the Important for interaction with G proteins element; it reads WSRW. The segment at 525–594 is disordered; sequence PTATTNGHPQ…LLQEEWETVM (70 aa). Low complexity predominate over residues 543–558; the sequence is TPALETLETTPPATAA. A Phosphothreonine modification is found at T552.

Belongs to the G-protein coupled receptor 2 family. In terms of assembly, homodimer in the absence of bound ligand. Peptide hormone binding leads to dissociation of the homodimer. Post-translationally, N-glycosylated.

Its subcellular location is the cell membrane. Its function is as follows. G-protein-coupled receptor for parathyroid hormone (PTH) and for parathyroid hormone-related peptide (PTHLH). Ligand binding causes a conformation change that triggers signaling via guanine nucleotide-binding proteins (G proteins) and modulates the activity of downstream effectors, such as adenylate cyclase (cAMP). PTH1R is coupled to G(s) G alpha proteins and mediates activation of adenylate cyclase activity. PTHLH dissociates from PTH1R more rapidly than PTH; as consequence, the cAMP response induced by PTHLH decays faster than the response induced by PTH. The polypeptide is Parathyroid hormone/parathyroid hormone-related peptide receptor (PTH1R) (Pongo abelii (Sumatran orangutan)).